The following is a 181-amino-acid chain: Translation initiation factor IF-3 (181 aa).

Belongs to the IF-3 family. Monomer.

The protein resides in the cytoplasm. IF-3 binds to the 30S ribosomal subunit and shifts the equilibrium between 70S ribosomes and their 50S and 30S subunits in favor of the free subunits, thus enhancing the availability of 30S subunits on which protein synthesis initiation begins. The protein is Translation initiation factor IF-3 of Mycoplasma capricolum subsp. capricolum (strain California kid / ATCC 27343 / NCTC 10154).